The chain runs to 286 residues: Shikimate dehydrogenase (NADP(+)) (286 aa).

Residues 19–21 and Thr66 each bind shikimate; that span reads SVS. The active-site Proton acceptor is Lys70. Positions 91 and 106 each coordinate shikimate. Residues 130 to 134 and Ala225 contribute to the NADP(+) site; that span reads GAGGS. Residue Tyr227 coordinates shikimate. NADP(+) is bound at residue Gly248.

It belongs to the shikimate dehydrogenase family. In terms of assembly, homodimer.

It carries out the reaction shikimate + NADP(+) = 3-dehydroshikimate + NADPH + H(+). Its pathway is metabolic intermediate biosynthesis; chorismate biosynthesis; chorismate from D-erythrose 4-phosphate and phosphoenolpyruvate: step 4/7. Functionally, involved in the biosynthesis of the chorismate, which leads to the biosynthesis of aromatic amino acids. Catalyzes the reversible NADPH linked reduction of 3-dehydroshikimate (DHSA) to yield shikimate (SA). In Dehalococcoides mccartyi (strain ATCC BAA-2266 / KCTC 15142 / 195) (Dehalococcoides ethenogenes (strain 195)), this protein is Shikimate dehydrogenase (NADP(+)).